The primary structure comprises 399 residues: CCA-adding enzyme (399 aa).

Residues glycine 32 and arginine 35 each contribute to the ATP site. CTP-binding residues include glycine 32 and arginine 35. Mg(2+) is bound by residues aspartate 45 and aspartate 47. ATP-binding residues include arginine 116, aspartate 159, arginine 162, arginine 165, and arginine 168. Positions 116, 159, 162, 165, and 168 each coordinate CTP.

Belongs to the tRNA nucleotidyltransferase/poly(A) polymerase family. Bacterial CCA-adding enzyme type 3 subfamily. As to quaternary structure, homodimer. Mg(2+) is required as a cofactor.

It catalyses the reaction a tRNA precursor + 2 CTP + ATP = a tRNA with a 3' CCA end + 3 diphosphate. The catalysed reaction is a tRNA with a 3' CCA end + 2 CTP + ATP = a tRNA with a 3' CCACCA end + 3 diphosphate. Its function is as follows. Catalyzes the addition and repair of the essential 3'-terminal CCA sequence in tRNAs without using a nucleic acid template. Adds these three nucleotides in the order of C, C, and A to the tRNA nucleotide-73, using CTP and ATP as substrates and producing inorganic pyrophosphate. tRNA 3'-terminal CCA addition is required both for tRNA processing and repair. Also involved in tRNA surveillance by mediating tandem CCA addition to generate a CCACCA at the 3' terminus of unstable tRNAs. While stable tRNAs receive only 3'-terminal CCA, unstable tRNAs are marked with CCACCA and rapidly degraded. This is CCA-adding enzyme from Streptococcus pneumoniae serotype 19F (strain G54).